The primary structure comprises 193 residues: Recombination protein RecR (193 aa).

The C4-type zinc finger occupies cysteine 61 to cysteine 76. The region spanning serine 84–proline 170 is the Toprim domain.

This sequence belongs to the RecR family.

Its function is as follows. May play a role in DNA repair. It seems to be involved in an RecBC-independent recombinational process of DNA repair. It may act with RecF and RecO. This is Recombination protein RecR from Helicobacter pylori (strain HPAG1).